The chain runs to 339 residues: Phenylalanine--tRNA ligase alpha subunit (339 aa).

Glu-254 serves as a coordination point for Mg(2+).

Belongs to the class-II aminoacyl-tRNA synthetase family. Phe-tRNA synthetase alpha subunit type 1 subfamily. Tetramer of two alpha and two beta subunits. Mg(2+) serves as cofactor.

The protein resides in the cytoplasm. It carries out the reaction tRNA(Phe) + L-phenylalanine + ATP = L-phenylalanyl-tRNA(Phe) + AMP + diphosphate + H(+). The sequence is that of Phenylalanine--tRNA ligase alpha subunit from Dictyoglomus turgidum (strain DSM 6724 / Z-1310).